Here is a 122-residue protein sequence, read N- to C-terminus: Large ribosomal subunit protein uL18 (122 aa).

It belongs to the universal ribosomal protein uL18 family. In terms of assembly, part of the 50S ribosomal subunit; part of the 5S rRNA/L5/L18/L25 subcomplex. Contacts the 5S and 23S rRNAs.

This is one of the proteins that bind and probably mediate the attachment of the 5S RNA into the large ribosomal subunit, where it forms part of the central protuberance. The sequence is that of Large ribosomal subunit protein uL18 from Citrifermentans bemidjiense (strain ATCC BAA-1014 / DSM 16622 / JCM 12645 / Bem) (Geobacter bemidjiensis).